We begin with the raw amino-acid sequence, 305 residues long: Ribonuclease BN (305 aa).

Zn(2+) is bound by residues histidine 64, histidine 66, aspartate 68, histidine 69, histidine 141, aspartate 212, and histidine 270. The Proton acceptor role is filled by aspartate 68.

The protein belongs to the RNase Z family. RNase BN subfamily. Homodimer. Zn(2+) is required as a cofactor.

Functionally, zinc phosphodiesterase, which has both exoribonuclease and endoribonuclease activities. The protein is Ribonuclease BN of Escherichia coli O7:K1 (strain IAI39 / ExPEC).